The following is a 228-amino-acid chain: Octanoyltransferase (228 aa).

The BPL/LPL catalytic domain maps to 31–212 (EETDGILILL…KFEEVFEIKF (182 aa)). Residues 76 to 83 (RGGKITFH), 143 to 145 (AIG), and 156 to 158 (GIA) each bind substrate. The active-site Acyl-thioester intermediate is the cysteine 174.

It belongs to the LipB family.

It localises to the cytoplasm. The catalysed reaction is octanoyl-[ACP] + L-lysyl-[protein] = N(6)-octanoyl-L-lysyl-[protein] + holo-[ACP] + H(+). Its pathway is protein modification; protein lipoylation via endogenous pathway; protein N(6)-(lipoyl)lysine from octanoyl-[acyl-carrier-protein]: step 1/2. In terms of biological role, catalyzes the transfer of endogenously produced octanoic acid from octanoyl-acyl-carrier-protein onto the lipoyl domains of lipoate-dependent enzymes. Lipoyl-ACP can also act as a substrate although octanoyl-ACP is likely to be the physiological substrate. This is Octanoyltransferase from Caldanaerobacter subterraneus subsp. tengcongensis (strain DSM 15242 / JCM 11007 / NBRC 100824 / MB4) (Thermoanaerobacter tengcongensis).